A 442-amino-acid polypeptide reads, in one-letter code: Probable alpha-galactosidase B (442 aa).

An N-terminal signal peptide occupies residues 1–19; it reads MQRYISLSVSLSLLSGANA. 2 disulfides stabilise this stretch: Cys-42/Cys-74 and Cys-124/Cys-154. The active-site Nucleophile is the Asp-152. 4 N-linked (GlcNAc...) asparagine glycosylation sites follow: Asn-159, Asn-173, Asn-179, and Asn-215. 224–228 contributes to the substrate binding site; that stretch reads EWGQA. An N-linked (GlcNAc...) asparagine glycan is attached at Asn-235. Asp-246 (proton donor) is an active-site residue. N-linked (GlcNAc...) asparagine glycosylation is present at Asn-285.

Belongs to the glycosyl hydrolase 27 family.

The protein localises to the secreted. It carries out the reaction Hydrolysis of terminal, non-reducing alpha-D-galactose residues in alpha-D-galactosides, including galactose oligosaccharides, galactomannans and galactolipids.. Hydrolyzes a variety of simple alpha-D-galactoside as well as more complex molecules such as oligosaccharides and polysaccharides. The protein is Probable alpha-galactosidase B (aglB) of Aspergillus oryzae (strain ATCC 42149 / RIB 40) (Yellow koji mold).